The primary structure comprises 425 residues: Succinate--CoA ligase [ADP-forming] subunit beta, mitochondrial (425 aa).

A mitochondrion-targeting transit peptide spans 1–14 (NNHGLQIQQQQQRN). Positions 23–250 (MELLQEAGVS…SNSAYRQKKI (228 aa)) constitute an ATP-grasp domain. Lysine 40 carries the post-translational modification N6-acetyllysine. Tyrosine 46 is subject to Phosphotyrosine. Lysine 50 carries the post-translational modification N6-acetyllysine; alternate. Lysine 50 carries the post-translational modification N6-succinyllysine; alternate. Residues lysine 60 and 67–69 (GRG) contribute to the ATP site. Residues lysine 91, lysine 101, lysine 105, and lysine 178 each carry the N6-acetyllysine modification. Mg(2+)-binding residues include asparagine 220 and aspartate 234. Position 241 is a phosphoserine (serine 241). Asparagine 285 contributes to the substrate binding site. Threonine 303 is modified (phosphothreonine). Lysine 330 carries the post-translational modification N6-acetyllysine. Position 342–344 (342–344 (GIM)) interacts with substrate. Position 400 is an N6-acetyllysine (lysine 400).

The protein belongs to the succinate/malate CoA ligase beta subunit family. ATP-specific subunit beta subfamily. Heterodimer of an alpha and a beta subunit. The beta subunit determines specificity for ATP. Interacts with ALAS2. Requires Mg(2+) as cofactor.

The protein resides in the mitochondrion. It carries out the reaction succinate + ATP + CoA = succinyl-CoA + ADP + phosphate. Its pathway is carbohydrate metabolism; tricarboxylic acid cycle; succinate from succinyl-CoA (ligase route): step 1/1. In terms of biological role, ATP-specific succinyl-CoA synthetase functions in the citric acid cycle (TCA), coupling the hydrolysis of succinyl-CoA to the synthesis of ATP and thus represents the only step of substrate-level phosphorylation in the TCA. The beta subunit provides nucleotide specificity of the enzyme and binds the substrate succinate, while the binding sites for coenzyme A and phosphate are found in the alpha subunit. In Sus scrofa (Pig), this protein is Succinate--CoA ligase [ADP-forming] subunit beta, mitochondrial.